The sequence spans 401 residues: MFHLDTLATLVAATLTLLLGRKLVHSVSFLKKYTIPEPVAGGLLVALALLVLKKSMGWEVNFDMSLRDPLMLAFFATIGLNANIASLRAGGRVVGIFLIVVVGLLVMQNAIGIGMASLLGLDPLMGLLAGSITLSGGHGTGAAWSKLFIERYGFTNATEVAMACATFGLVLGGLIGGPVARYLVKHSTTPNGIPDDQEVPTAFEKPDVGRMITSLVLIETIALIAICLTVGKIVAQLLAGTAFELPTFVCVLFVGVILSNGLSIMGFYRVFERAVSVLGNVSLSLFLAMALMGLKLWELASLALPMLAILVVQTIFMALYAIFVTWRMMGKNYDAAVLAAGHCGFGLGATPTAIANMQAITERFGPSHMAFLVVPMVGAFFIDIVNALVIKLYLMLPIFAG.

The Periplasmic segment spans residues 1 to 6; it reads MFHLDT. The chain crosses the membrane as a helical span at residues 7-24; that stretch reads LATLVAATLTLLLGRKLV. The Cytoplasmic segment spans residues 25-32; it reads HSVSFLKK. A helical transmembrane segment spans residues 33 to 52; the sequence is YTIPEPVAGGLLVALALLVL. The Periplasmic portion of the chain corresponds to 53–69; it reads KKSMGWEVNFDMSLRDP. The helical transmembrane segment at 70–87 threads the bilayer; it reads LMLAFFATIGLNANIASL. Over 88 to 93 the chain is Cytoplasmic; that stretch reads RAGGRV. The chain crosses the membrane as a helical span at residues 94 to 116; that stretch reads VGIFLIVVVGLLVMQNAIGIGMA. At 117 to 156 the chain is on the periplasmic side; it reads SLLGLDPLMGLLAGSITLSGGHGTGAAWSKLFIERYGFTN. Residues 157 to 179 traverse the membrane as a helical segment; it reads ATEVAMACATFGLVLGGLIGGPV. Topologically, residues 180–212 are cytoplasmic; it reads ARYLVKHSTTPNGIPDDQEVPTAFEKPDVGRMI. A helical membrane pass occupies residues 213–235; that stretch reads TSLVLIETIALIAICLTVGKIVA. Residues 236–244 lie on the Periplasmic side of the membrane; that stretch reads QLLAGTAFE. Residues 245–267 traverse the membrane as a helical segment; sequence LPTFVCVLFVGVILSNGLSIMGF. The Cytoplasmic segment spans residues 268-276; that stretch reads YRVFERAVS. The helical transmembrane segment at 277–292 threads the bilayer; that stretch reads VLGNVSLSLFLAMALM. Residues 293–301 are Periplasmic-facing; the sequence is GLKLWELAS. Residues 302–324 form a helical membrane-spanning segment; the sequence is LALPMLAILVVQTIFMALYAIFV. The Cytoplasmic segment spans residues 325-367; it reads TWRMMGKNYDAAVLAAGHCGFGLGATPTAIANMQAITERFGPS. The chain crosses the membrane as a helical span at residues 368-390; sequence HMAFLVVPMVGAFFIDIVNALVI. Residues 391–401 are Periplasmic-facing; sequence KLYLMLPIFAG.

It belongs to the glutamate:Na(+) symporter (ESS) (TC 2.A.27) family.

The protein resides in the cell inner membrane. Its activity is regulated as follows. Inhibited by the uncoupler carbonylcyanide m-chlorophenylhydrazone (CCCP) and the ionophore monensin. Its function is as follows. Catalyzes the sodium-dependent, binding-protein-independent transport of glutamate. This is Sodium/glutamate symporter from Escherichia coli (strain K12).